Here is a 234-residue protein sequence, read N- to C-terminus: Large ribosomal subunit protein uL1 (234 aa).

Belongs to the universal ribosomal protein uL1 family. In terms of assembly, part of the 50S ribosomal subunit.

Its function is as follows. Binds directly to 23S rRNA. The L1 stalk is quite mobile in the ribosome, and is involved in E site tRNA release. Functionally, protein L1 is also a translational repressor protein, it controls the translation of the L11 operon by binding to its mRNA. This chain is Large ribosomal subunit protein uL1, found in Pseudoalteromonas translucida (strain TAC 125).